We begin with the raw amino-acid sequence, 246 residues long: RVRARIPGLSSPEGEFPEDFEPRELPPFGAPAPTEPACPEEEEHIRAPSGHHQAGHCLMWACKACKRKSTTMDRRKAATMRERRRLKKVNQAFETLKRCTTANPNQRLPKVEILRNAIRYIESLQELLREQVENYYHLPGQSCSEPTSPSSSCSDAMGRTAAGPVWPARGSSFEAGYCPEMPHAYATEQSGALSSLDCLSRIVDRLSPAEEPGLPLRHAGSLSPGASIDSGARTPGSPPPRTYQAL.

The disordered stretch occupies residues 1–38 (RVRARIPGLSSPEGEFPEDFEPRELPPFGAPAPTEPAC). In terms of domain architecture, bHLH spans 73–124 (DRRKAATMRERRRLKKVNQAFETLKRCTTANPNQRLPKVEILRNAIRYIESL). The interval 210 to 246 (EEPGLPLRHAGSLSPGASIDSGARTPGSPPPRTYQAL) is disordered. The segment covering 236–246 (GSPPPRTYQAL) has biased composition (pro residues).

Efficient DNA binding requires dimerization with another bHLH protein.

The protein localises to the nucleus. Functionally, acts as a transcriptional activator that promotes transcription of muscle-specific target genes and plays a role in muscle differentiation. Induces fibroblasts to differentiate into myoblasts. Probable sequence specific DNA-binding protein. This chain is Myogenic factor 5 (MYF5), found in Coturnix japonica (Japanese quail).